The chain runs to 494 residues: MFEIKKICCIGAGYVGGPTCSVIAHMRPEIRVTVVDVNESRINAWNSPTLPIYEPGLKEVVESCRGKNLFFSTNIDDAIKEADLVFISVNTPTKTYGMGKGRAADLKYIEACARRIVQNSNGYKIVTEKSTVPVRAAESIRRIFDANTKPNLNLQVLSNPEFLAEGTAIKDLKNPDRVLIGGDETPEGQRAVQALCAVYEHWVPREKILTTNTWSSELSKLAANAFLAQRISSINSISALCEATGADVEEVATAIGMDQRIGNKFLKASVGFGGSCFQKDVLNLVYLCEALNLPEVARYWQQVIDMNDYQRRRFASRIIDSLFNTVTDKKIAILGFAFKKDTGDTRESSSIYISKYLMDEGAHLHIYDPKVPREQIVVDLSHPGVSEDDQVSRLVTISKDPYEACDGAHAVVICTEWDMFKELDYERIHKKMLKPAFIFDGRRVLDGLHNELQTIGFQIETIGKKVSSKRIPYAPSGEIPKFSLQDPPNKKPKV.

Residues 11–16 (GAGYVG), D36, R41, and 89–93 (VNTPT) each bind NAD(+). The interval 88-110 (SVNTPTKTYGMGKGRAADLKYIE) is disordered. Residue K107 is modified to N6-acetyllysine. Residues 129 to 135 (KSTVPVR) form an allosteric switch region region. NAD(+) is bound at residue 130-132 (STV). The active-site Proton donor/acceptor is E161. Residues 161-165 (EFLAE), 220-224 (KLAAN), R260, and 267-273 (KASVGFG) contribute to the substrate site. E165 is an NAD(+) binding site. The active-site Proton donor/acceptor is the K220. The active-site Nucleophile is the C276. Residue 276–279 (CFQK) participates in NAD(+) binding. The segment at 321–325 (SLFNT) is important for formation of active hexamer structure. 338–339 (FK) is a substrate binding site. R346 provides a ligand contact to NAD(+). Residue R442 participates in substrate binding. Residues 466 to 494 (VSSKRIPYAPSGEIPKFSLQDPPNKKPKV) form a disordered region. S476 carries the post-translational modification Phosphoserine.

Belongs to the UDP-glucose/GDP-mannose dehydrogenase family. In terms of assembly, homohexamer.

The enzyme catalyses UDP-alpha-D-glucose + 2 NAD(+) + H2O = UDP-alpha-D-glucuronate + 2 NADH + 3 H(+). The protein operates within nucleotide-sugar biosynthesis; UDP-alpha-D-glucuronate biosynthesis; UDP-alpha-D-glucuronate from UDP-alpha-D-glucose: step 1/1. With respect to regulation, UDP-alpha-D-xylose (UDX) acts as a feedback inhibitor. It binds at the same site as the substrate, but functions as allosteric inhibitor by triggering a conformation change that disrupts the active hexameric ring structure and gives rise to an inactive, horseshoe-shaped hexamer. Catalyzes the formation of UDP-alpha-D-glucuronate, a constituent of complex glycosaminoglycans. Required for the biosynthesis of chondroitin sulfate and heparan sulfate. Required for embryonic development via its role in the biosynthesis of glycosaminoglycans. Required for proper brain and neuronal development. In Pongo abelii (Sumatran orangutan), this protein is UDP-glucose 6-dehydrogenase (UGDH).